Reading from the N-terminus, the 105-residue chain is Replication initiation control protein YabA (105 aa).

Positions 79, 81, 95, and 98 each coordinate Zn(2+).

This sequence belongs to the YabA family. As to quaternary structure, homotetramer. Interacts with both DnaA and DnaN, acting as a bridge between these two proteins. It depends on Zn(2+) as a cofactor.

The protein resides in the cytoplasm. Its subcellular location is the nucleoid. Functionally, involved in control of chromosome replication initiation. Inhibits the cooperative binding of DnaA to the oriC region, thus negatively regulating initiation of chromosome replication. Inhibits the ability of DnaA-ATP to form a helix on DNA; does not disassemble preformed DnaA-DNA helices. Decreases the residence time of DnaA on the chromosome at its binding sites (oriC, replication forks and promoter-binding sites). Tethers DnaA to the replication machinery via the DNA polymerase beta sliding clamp subunit (dnaN). Associates with oriC and other DnaA targets on the chromosome in a DnaA-dependent manner. This chain is Replication initiation control protein YabA, found in Streptococcus suis (strain 98HAH33).